Consider the following 479-residue polypeptide: ATP synthase subunit beta (479 aa).

Position 168-175 (168-175 (GGAGVGKT)) interacts with ATP.

It belongs to the ATPase alpha/beta chains family. In terms of assembly, F-type ATPases have 2 components, CF(1) - the catalytic core - and CF(0) - the membrane proton channel. CF(1) has five subunits: alpha(3), beta(3), gamma(1), delta(1), epsilon(1). CF(0) has three main subunits: a(1), b(2) and c(9-12). The alpha and beta chains form an alternating ring which encloses part of the gamma chain. CF(1) is attached to CF(0) by a central stalk formed by the gamma and epsilon chains, while a peripheral stalk is formed by the delta and b chains.

The protein resides in the cell membrane. The catalysed reaction is ATP + H2O + 4 H(+)(in) = ADP + phosphate + 5 H(+)(out). Functionally, produces ATP from ADP in the presence of a proton gradient across the membrane. The catalytic sites are hosted primarily by the beta subunits. This chain is ATP synthase subunit beta, found in Frankia alni (strain DSM 45986 / CECT 9034 / ACN14a).